Reading from the N-terminus, the 541-residue chain is Sialate O-acetylesterase (541 aa).

The N-terminal stretch at 1-23 (MVSPGPVFGIVLLIIARVSRSAG) is a signal peptide. N-linked (GlcNAc...) asparagine glycosylation is found at Asn-107, Asn-138, Asn-188, Asn-293, Asn-356, Asn-427, Asn-448, and Asn-462.

Disulfide-linked heterodimer of a small subunit and a large subunit. In terms of processing, the two subunits are derived from a single precursor by proteolytic cleavage. The lysosomal isoform is glycosylated. Highly expressed in liver, testis, and kidney, whereas skeletal muscle, adipose tissue, and heart have lower levels. As to expression, highest expression in brain and ovary and lower levels in liver and thymus.

Its subcellular location is the lysosome. The protein localises to the cytoplasm. The catalysed reaction is N-acetyl-9-O-acetylneuraminate + H2O = N-acetylneuraminate + acetate + H(+). It carries out the reaction an Ac-O-9-sialoglycoconjugate + H2O = a sialoglycoconjugate + acetate + H(+). Inhibited by diisopropyl fluorophosphate and diethyl-P-nitrophenyl phosphate. Functionally, catalyzes the removal of O-acetyl ester groups from position 9 of the free diacetylated sialate N-acetyl-9-O-acetylneuraminate (Neu5,9Ac2) in the cytosol and of the diacetylated sialate residues of sialylglycoconjugates in the lysosomes. Together with the sialate-O-acetyltransferase they regulate the balance of acetylated sialoglycoconjugates, key players in various processes such as cell-cell interactions, host-pathogen recognition, and tumor antigenicity. The sequence is that of Sialate O-acetylesterase (Siae) from Mus musculus (Mouse).